The sequence spans 478 residues: Protein nucleotidyltransferase YdiU (478 aa).

ATP is bound by residues Gly84, Gly86, Arg87, Lys107, Asp119, Gly120, Arg170, and Arg177. The active-site Proton acceptor is the Asp246. Asn247 and Asp256 together coordinate Mg(2+). ATP is bound at residue Asp256.

The protein belongs to the SELO family. Requires Mg(2+) as cofactor. Mn(2+) serves as cofactor.

It catalyses the reaction L-seryl-[protein] + ATP = 3-O-(5'-adenylyl)-L-seryl-[protein] + diphosphate. The enzyme catalyses L-threonyl-[protein] + ATP = 3-O-(5'-adenylyl)-L-threonyl-[protein] + diphosphate. It carries out the reaction L-tyrosyl-[protein] + ATP = O-(5'-adenylyl)-L-tyrosyl-[protein] + diphosphate. The catalysed reaction is L-histidyl-[protein] + UTP = N(tele)-(5'-uridylyl)-L-histidyl-[protein] + diphosphate. It catalyses the reaction L-seryl-[protein] + UTP = O-(5'-uridylyl)-L-seryl-[protein] + diphosphate. The enzyme catalyses L-tyrosyl-[protein] + UTP = O-(5'-uridylyl)-L-tyrosyl-[protein] + diphosphate. In terms of biological role, nucleotidyltransferase involved in the post-translational modification of proteins. It can catalyze the addition of adenosine monophosphate (AMP) or uridine monophosphate (UMP) to a protein, resulting in modifications known as AMPylation and UMPylation. This is Protein nucleotidyltransferase YdiU from Escherichia coli O81 (strain ED1a).